The chain runs to 264 residues: Movement protein (264 aa).

The segment at 219–264 (PSYRSRSQSVGGRGKRHSKPPNRRLDSASEESSSVSFEDGLQSDHT) is disordered. Residues 231–240 (RGKRHSKPPN) show a composition bias toward basic residues.

Belongs to the tobamovirus movement protein family.

It localises to the host cytoplasm. The protein localises to the host cytoskeleton. The protein resides in the host cell junction. It is found in the host plasmodesma. Its function is as follows. Transports viral genome to neighboring plant cells directly through plasmosdesmata, without any budding. The movement protein allows efficient cell to cell propagation, by bypassing the host cell wall barrier. Forms a ribonucleoprotein complex with viral RNA. Binds microtubules and modulates microtubule stability. Can bind double-stranded DNA. In Cucumber green mottle mosaic virus (strain watermelon SH) (CGMMV), this protein is Movement protein (MP).